Reading from the N-terminus, the 401-residue chain is 3-oxoadipyl-CoA/3-oxo-5,6-dehydrosuberyl-CoA thiolase (401 aa).

Cys-90 acts as the Acyl-thioester intermediate in catalysis. Catalysis depends on proton acceptor residues His-357 and Cys-387.

It belongs to the thiolase-like superfamily. Thiolase family.

The catalysed reaction is succinyl-CoA + acetyl-CoA = 3-oxoadipyl-CoA + CoA. It catalyses the reaction 2,3-didehydroadipoyl-CoA + acetyl-CoA = 3-oxo-5,6-didehydrosuberyl-CoA + CoA. The protein operates within aromatic compound metabolism; phenylacetate degradation. Its function is as follows. Catalyzes the thiolytic cleavage of the beta-keto C8 intermediate 3-oxo-5,6-dehydrosuberyl-CoA with CoA to yield the C6 intermediate 2,3-dehydroadipyl-CoA and acetyl-CoA. Besides it catalyzes also the last step of the pathway, in which 3-oxoadipyl-CoA similarly is cleaved to acetyl-CoA and succinyl-CoA. In Escherichia coli (strain K12), this protein is 3-oxoadipyl-CoA/3-oxo-5,6-dehydrosuberyl-CoA thiolase (paaJ).